A 171-amino-acid polypeptide reads, in one-letter code: Photosystem I assembly protein Ycf3 (171 aa).

TPR repeat units follow at residues 33 to 66, 70 to 103, and 118 to 151; these read AFSY…EEDP, SYIL…NSRL, and GTKS…APNN.

The protein belongs to the Ycf3 family.

The protein localises to the plastid. It is found in the chloroplast thylakoid membrane. Its function is as follows. Essential for the assembly of the photosystem I (PSI) complex. May act as a chaperone-like factor to guide the assembly of the PSI subunits. The sequence is that of Photosystem I assembly protein Ycf3 from Emiliania huxleyi (Coccolithophore).